A 649-amino-acid chain; its full sequence is Acid beta-fructofuranosidase (649 aa).

Residues 1 to 22 (MEHHKPLLPTSSHAAPTSSTRK) lie on the Cytoplasmic side of the membrane. The propeptide at 1–101 (MEHHKPLLPT…NLLFAGEGGA (101 aa)) is removed in mature form. A helical; Signal-anchor for type II membrane protein transmembrane segment spans residues 23–43 (DLLFVLCGLLFLSSLVAYGGY). Over 44-649 (RASGVPHAHL…PFPFNPDQKS (606 aa)) the chain is Lumenal. The tract at residues 52-75 (HLSSPTSNHQQDHQSPTSLPSSKW) is disordered. Residues 54–72 (SSPTSNHQQDHQSPTSLPS) are compositionally biased toward polar residues. Residues 127 to 130 (WMND), glutamine 146, tryptophan 154, and 189 to 190 (WT) contribute to the substrate site. Residue aspartate 130 is part of the active site. Asparagine 210 carries N-linked (GlcNAc...) (complex) asparagine glycosylation. Position 253–254 (253–254 (RD)) interacts with substrate. An N-linked (GlcNAc...) (complex) asparagine glycan is attached at asparagine 275. Substrate-binding residues include glutamate 308 and aspartate 341. Cysteine 498 and cysteine 546 are disulfide-bonded. N-linked (GlcNAc...) (high mannose) asparagine glycosylation is present at asparagine 618.

It belongs to the glycosyl hydrolase 32 family. As to quaternary structure, present in two forms, a 70 kDa monomer and a heterodimer of the 30 kDa and 38 kDa subunits. The ratio of the levels of the two forms within cells appears to be regulated developmentally.

Its subcellular location is the membrane. The protein localises to the vacuole lumen. It carries out the reaction Hydrolysis of terminal non-reducing beta-D-fructofuranoside residues in beta-D-fructofuranosides.. It participates in glycan biosynthesis; sucrose metabolism. In terms of biological role, possible role in the continued mobilization of sucrose to sink organs. The protein is Acid beta-fructofuranosidase (INVA) of Vigna radiata var. radiata (Mung bean).